The chain runs to 581 residues: Proline--tRNA ligase (581 aa).

Belongs to the class-II aminoacyl-tRNA synthetase family. ProS type 1 subfamily. In terms of assembly, homodimer.

The protein localises to the cytoplasm. The catalysed reaction is tRNA(Pro) + L-proline + ATP = L-prolyl-tRNA(Pro) + AMP + diphosphate. Its function is as follows. Catalyzes the attachment of proline to tRNA(Pro) in a two-step reaction: proline is first activated by ATP to form Pro-AMP and then transferred to the acceptor end of tRNA(Pro). As ProRS can inadvertently accommodate and process non-cognate amino acids such as alanine and cysteine, to avoid such errors it has two additional distinct editing activities against alanine. One activity is designated as 'pretransfer' editing and involves the tRNA(Pro)-independent hydrolysis of activated Ala-AMP. The other activity is designated 'posttransfer' editing and involves deacylation of mischarged Ala-tRNA(Pro). The misacylated Cys-tRNA(Pro) is not edited by ProRS. The chain is Proline--tRNA ligase from Rhodococcus erythropolis (strain PR4 / NBRC 100887).